Reading from the N-terminus, the 483-residue chain is Regulatory protein ViaA (483 aa).

The protein belongs to the ViaA family. In terms of assembly, homodimer. Interacts with RavA.

It is found in the cytoplasm. In terms of biological role, component of the RavA-ViaA chaperone complex, which may act on the membrane to optimize the function of some of the respiratory chains. ViaA stimulates the ATPase activity of RavA. The chain is Regulatory protein ViaA from Escherichia coli (strain SMS-3-5 / SECEC).